Reading from the N-terminus, the 404-residue chain is Tryptophan synthase beta chain (404 aa).

Residue K94 is modified to N6-(pyridoxal phosphate)lysine.

This sequence belongs to the TrpB family. Tetramer of two alpha and two beta chains. Requires pyridoxal 5'-phosphate as cofactor.

The enzyme catalyses (1S,2R)-1-C-(indol-3-yl)glycerol 3-phosphate + L-serine = D-glyceraldehyde 3-phosphate + L-tryptophan + H2O. Its pathway is amino-acid biosynthesis; L-tryptophan biosynthesis; L-tryptophan from chorismate: step 5/5. Functionally, the beta subunit is responsible for the synthesis of L-tryptophan from indole and L-serine. The polypeptide is Tryptophan synthase beta chain (Staphylococcus aureus (strain USA300)).